Here is a 205-residue protein sequence, read N- to C-terminus: Large ribosomal subunit protein uL3 (205 aa).

This sequence belongs to the universal ribosomal protein uL3 family. In terms of assembly, part of the 50S ribosomal subunit. Forms a cluster with proteins L14 and L19.

In terms of biological role, one of the primary rRNA binding proteins, it binds directly near the 3'-end of the 23S rRNA, where it nucleates assembly of the 50S subunit. The protein is Large ribosomal subunit protein uL3 of Bacteroides fragilis (strain ATCC 25285 / DSM 2151 / CCUG 4856 / JCM 11019 / LMG 10263 / NCTC 9343 / Onslow / VPI 2553 / EN-2).